A 363-amino-acid polypeptide reads, in one-letter code: Peptide chain release factor 2 (363 aa).

Position 251 is an N5-methylglutamine (Gln251).

This sequence belongs to the prokaryotic/mitochondrial release factor family. Methylated by PrmC. Methylation increases the termination efficiency of RF2.

The protein resides in the cytoplasm. In terms of biological role, peptide chain release factor 2 directs the termination of translation in response to the peptide chain termination codons UGA and UAA. In Helicobacter pylori (strain ATCC 700392 / 26695) (Campylobacter pylori), this protein is Peptide chain release factor 2 (prfB).